Here is a 236-residue protein sequence, read N- to C-terminus: Phosphoribosylaminoimidazole-succinocarboxamide synthase (236 aa).

The protein belongs to the SAICAR synthetase family.

The enzyme catalyses 5-amino-1-(5-phospho-D-ribosyl)imidazole-4-carboxylate + L-aspartate + ATP = (2S)-2-[5-amino-1-(5-phospho-beta-D-ribosyl)imidazole-4-carboxamido]succinate + ADP + phosphate + 2 H(+). It participates in purine metabolism; IMP biosynthesis via de novo pathway; 5-amino-1-(5-phospho-D-ribosyl)imidazole-4-carboxamide from 5-amino-1-(5-phospho-D-ribosyl)imidazole-4-carboxylate: step 1/2. In Streptococcus equi subsp. zooepidemicus (strain MGCS10565), this protein is Phosphoribosylaminoimidazole-succinocarboxamide synthase.